Here is a 160-residue protein sequence, read N- to C-terminus: 2-C-methyl-D-erythritol 2,4-cyclodiphosphate synthase (160 aa).

Residues Asp10 and His12 each coordinate a divalent metal cation. 4-CDP-2-C-methyl-D-erythritol 2-phosphate is bound by residues Asp10–His12 and His36–Ser37. Residue His44 participates in a divalent metal cation binding. Residues Asp58–Gly60, Phe63–Asp67, Ala102–Ala108, Thr134–Glu137, Phe141, and Arg144 contribute to the 4-CDP-2-C-methyl-D-erythritol 2-phosphate site.

The protein belongs to the IspF family. Homotrimer. A divalent metal cation is required as a cofactor.

It catalyses the reaction 4-CDP-2-C-methyl-D-erythritol 2-phosphate = 2-C-methyl-D-erythritol 2,4-cyclic diphosphate + CMP. Its pathway is isoprenoid biosynthesis; isopentenyl diphosphate biosynthesis via DXP pathway; isopentenyl diphosphate from 1-deoxy-D-xylulose 5-phosphate: step 4/6. Its function is as follows. Involved in the biosynthesis of isopentenyl diphosphate (IPP) and dimethylallyl diphosphate (DMAPP), two major building blocks of isoprenoid compounds. Catalyzes the conversion of 4-diphosphocytidyl-2-C-methyl-D-erythritol 2-phosphate (CDP-ME2P) to 2-C-methyl-D-erythritol 2,4-cyclodiphosphate (ME-CPP) with a corresponding release of cytidine 5-monophosphate (CMP). This is 2-C-methyl-D-erythritol 2,4-cyclodiphosphate synthase from Shewanella denitrificans (strain OS217 / ATCC BAA-1090 / DSM 15013).